The chain runs to 124 residues: Ribonuclease pancreatic (124 aa).

Residues K7 and R10 each contribute to the substrate site. The active-site Proton acceptor is the H12. Cystine bridges form between C26–C84, C40–C95, C58–C110, and C65–C72. N34 carries an N-linked (GlcNAc...) asparagine; partial glycan. Substrate-binding positions include 41-45 (KPVBT), K66, and R85. H119 functions as the Proton donor in the catalytic mechanism.

This sequence belongs to the pancreatic ribonuclease family. Monomer. Interacts with and forms tight 1:1 complexes with RNH1. Dimerization of two such complexes may occur. Interaction with RNH1 inhibits this protein. Pancreas.

The protein resides in the secreted. It catalyses the reaction an [RNA] containing cytidine + H2O = an [RNA]-3'-cytidine-3'-phosphate + a 5'-hydroxy-ribonucleotide-3'-[RNA].. The enzyme catalyses an [RNA] containing uridine + H2O = an [RNA]-3'-uridine-3'-phosphate + a 5'-hydroxy-ribonucleotide-3'-[RNA].. In terms of biological role, endonuclease that catalyzes the cleavage of RNA on the 3' side of pyrimidine nucleotides. Acts on single-stranded and double-stranded RNA. This chain is Ribonuclease pancreatic (RNASE1), found in Damaliscus korrigum (Topi).